A 37-amino-acid polypeptide reads, in one-letter code: Large ribosomal subunit protein bL36 (37 aa).

The protein belongs to the bacterial ribosomal protein bL36 family.

The polypeptide is Large ribosomal subunit protein bL36 (Leptospira biflexa serovar Patoc (strain Patoc 1 / Ames)).